Reading from the N-terminus, the 950-residue chain is UvrABC system protein A (950 aa).

Gly-36–Ser-43 lines the ATP pocket. The segment at Cys-260–Cys-287 adopts a C4-type zinc-finger fold. ABC transporter domains follow at residues Phe-317 to Leu-599 and Ala-619 to Lys-947. Gly-651–Ser-658 provides a ligand contact to ATP. The segment at Cys-750–Cys-776 adopts a C4-type zinc-finger fold.

It belongs to the ABC transporter superfamily. UvrA family. As to quaternary structure, forms a heterotetramer with UvrB during the search for lesions.

It localises to the cytoplasm. Functionally, the UvrABC repair system catalyzes the recognition and processing of DNA lesions. UvrA is an ATPase and a DNA-binding protein. A damage recognition complex composed of 2 UvrA and 2 UvrB subunits scans DNA for abnormalities. When the presence of a lesion has been verified by UvrB, the UvrA molecules dissociate. The protein is UvrABC system protein A of Borreliella burgdorferi (strain ATCC 35210 / DSM 4680 / CIP 102532 / B31) (Borrelia burgdorferi).